The primary structure comprises 461 residues: Cysteine--tRNA ligase (461 aa).

A Zn(2+)-binding site is contributed by C28. Residues 30–40 (ITVYDLCHIGH) carry the 'HIGH' region motif. Zn(2+) is bound by residues C209, H234, and E238. The short motif at 266 to 270 (KMSKS) is the 'KMSKS' region element. K269 is an ATP binding site.

The protein belongs to the class-I aminoacyl-tRNA synthetase family. Monomer. It depends on Zn(2+) as a cofactor.

It localises to the cytoplasm. The enzyme catalyses tRNA(Cys) + L-cysteine + ATP = L-cysteinyl-tRNA(Cys) + AMP + diphosphate. The protein is Cysteine--tRNA ligase of Salmonella agona (strain SL483).